We begin with the raw amino-acid sequence, 156 residues long: Small ribosomal subunit protein uS7c (156 aa).

Belongs to the universal ribosomal protein uS7 family. As to quaternary structure, part of the 30S ribosomal subunit.

The protein resides in the plastid. It localises to the chloroplast. In terms of biological role, one of the primary rRNA binding proteins, it binds directly to 16S rRNA where it nucleates assembly of the head domain of the 30S subunit. The protein is Small ribosomal subunit protein uS7c (rps7) of Ostreococcus tauri.